Consider the following 119-residue polypeptide: Putative transmembrane protein ORF119 (119 aa).

The next 3 membrane-spanning stretches (helical) occupy residues 9–29 (TLAIALVFLGISLIFLVPAMV), 73–93 (QYAGIYTLYLSFISFVGSIFT), and 95–115 (PIALIMLILVSLIITLFAFYY).

It localises to the host membrane. The polypeptide is Putative transmembrane protein ORF119 (Acidianus convivator (ATV)).